Reading from the N-terminus, the 488-residue chain is L-arabinose isomerase 2 (488 aa).

Mn(2+)-binding residues include glutamate 306, glutamate 331, histidine 348, and histidine 447.

It belongs to the arabinose isomerase family. The cofactor is Mn(2+).

The catalysed reaction is beta-L-arabinopyranose = L-ribulose. Its pathway is carbohydrate degradation; L-arabinose degradation via L-ribulose; D-xylulose 5-phosphate from L-arabinose (bacterial route): step 1/3. In terms of biological role, catalyzes the conversion of L-arabinose to L-ribulose. In Clostridium acetobutylicum (strain ATCC 824 / DSM 792 / JCM 1419 / IAM 19013 / LMG 5710 / NBRC 13948 / NRRL B-527 / VKM B-1787 / 2291 / W), this protein is L-arabinose isomerase 2.